A 93-amino-acid chain; its full sequence is Chaperone NapD (93 aa).

The protein belongs to the NapD family. As to quaternary structure, interacts with the cytoplasmic NapA precursor.

The protein localises to the cytoplasm. In terms of biological role, chaperone for NapA, the catalytic subunit of the periplasmic nitrate reductase. It binds directly and specifically to the twin-arginine signal peptide of NapA, preventing premature interaction with the Tat translocase and premature export. The chain is Chaperone NapD from Haemophilus influenzae (strain ATCC 51907 / DSM 11121 / KW20 / Rd).